A 161-amino-acid chain; its full sequence is MSQLTHINAAGEAHMVDVSAKAETVREARAEAFVTMRSETLAMIIDGRHHKGDVFATARIAGIQAAKRTWDLIPLCHPLMLSKVEVNLQAEPEHNRVRIETLCRLTGKTGVEMEALTAASVAALTIYDMCKAVQKDMVIGSVRLLAKSGGKSGDFKVEADD.

Residues 75–77 (LCH) and 113–114 (ME) each bind substrate. Residue aspartate 128 is part of the active site.

It belongs to the MoaC family. Homohexamer; trimer of dimers.

It catalyses the reaction (8S)-3',8-cyclo-7,8-dihydroguanosine 5'-triphosphate = cyclic pyranopterin phosphate + diphosphate. Its pathway is cofactor biosynthesis; molybdopterin biosynthesis. Functionally, catalyzes the conversion of (8S)-3',8-cyclo-7,8-dihydroguanosine 5'-triphosphate to cyclic pyranopterin monophosphate (cPMP). The polypeptide is Cyclic pyranopterin monophosphate synthase (Escherichia coli O9:H4 (strain HS)).